The chain runs to 177 residues: ATP-dependent protease subunit HslV (177 aa).

Thr7 is a catalytic residue. Residues Ala162, Cys165, and Thr168 each contribute to the Na(+) site.

This sequence belongs to the peptidase T1B family. HslV subfamily. In terms of assembly, a double ring-shaped homohexamer of HslV is capped on each side by a ring-shaped HslU homohexamer. The assembly of the HslU/HslV complex is dependent on binding of ATP.

It localises to the cytoplasm. The enzyme catalyses ATP-dependent cleavage of peptide bonds with broad specificity.. Allosterically activated by HslU binding. Protease subunit of a proteasome-like degradation complex believed to be a general protein degrading machinery. The chain is ATP-dependent protease subunit HslV from Leptospira biflexa serovar Patoc (strain Patoc 1 / Ames).